We begin with the raw amino-acid sequence, 333 residues long: Transaldolase (333 aa).

The Schiff-base intermediate with substrate role is filled by lysine 136.

Belongs to the transaldolase family. Type 1 subfamily. As to quaternary structure, homodimer.

It is found in the cytoplasm. The enzyme catalyses D-sedoheptulose 7-phosphate + D-glyceraldehyde 3-phosphate = D-erythrose 4-phosphate + beta-D-fructose 6-phosphate. It participates in carbohydrate degradation; pentose phosphate pathway; D-glyceraldehyde 3-phosphate and beta-D-fructose 6-phosphate from D-ribose 5-phosphate and D-xylulose 5-phosphate (non-oxidative stage): step 2/3. Its function is as follows. Transaldolase is important for the balance of metabolites in the pentose-phosphate pathway. This Acidobacterium capsulatum (strain ATCC 51196 / DSM 11244 / BCRC 80197 / JCM 7670 / NBRC 15755 / NCIMB 13165 / 161) protein is Transaldolase.